The sequence spans 762 residues: Probable inorganic carbon transporter subunit DabA (762 aa).

4 residues coordinate Zn(2+): Cys279, Asp281, His461, and Cys476.

This sequence belongs to the inorganic carbon transporter (TC 9.A.2) DabA family. As to quaternary structure, forms a complex with DabB. Requires Zn(2+) as cofactor.

The protein resides in the cell inner membrane. In terms of biological role, part of an energy-coupled inorganic carbon pump. The chain is Probable inorganic carbon transporter subunit DabA from Legionella pneumophila (strain Lens).